The chain runs to 473 residues: Bifunctional protein GlmU (473 aa).

Residues 1–241 are pyrophosphorylase; the sequence is MATQPTPLTA…VGSLVGINDR (241 aa). Residues 13–16, Lys27, Gln84, and 89–90 each bind UDP-N-acetyl-alpha-D-glucosamine; these read LAAG and GT. Residue Asp114 participates in Mg(2+) binding. The UDP-N-acetyl-alpha-D-glucosamine site is built by Gly152, Glu167, Asn182, and Asn239. A Mg(2+)-binding site is contributed by Asn239. The tract at residues 242 to 262 is linker; the sequence is AQLAAAEEVLYGRIADRLRKS. An N-acetyltransferase region spans residues 263 to 473; that stretch reads GVTIRTSARI…KARLKDAAKK (211 aa). 2 residues coordinate UDP-N-acetyl-alpha-D-glucosamine: Arg343 and Lys361. The active-site Proton acceptor is the His373. UDP-N-acetyl-alpha-D-glucosamine-binding residues include Tyr376 and Asn387. Acetyl-CoA-binding positions include Ala390, 396-397, Ser415, Thr433, and Arg450; that span reads NY.

In the N-terminal section; belongs to the N-acetylglucosamine-1-phosphate uridyltransferase family. The protein in the C-terminal section; belongs to the transferase hexapeptide repeat family. As to quaternary structure, homotrimer. Mg(2+) is required as a cofactor.

It localises to the cytoplasm. It catalyses the reaction alpha-D-glucosamine 1-phosphate + acetyl-CoA = N-acetyl-alpha-D-glucosamine 1-phosphate + CoA + H(+). The catalysed reaction is N-acetyl-alpha-D-glucosamine 1-phosphate + UTP + H(+) = UDP-N-acetyl-alpha-D-glucosamine + diphosphate. Its pathway is nucleotide-sugar biosynthesis; UDP-N-acetyl-alpha-D-glucosamine biosynthesis; N-acetyl-alpha-D-glucosamine 1-phosphate from alpha-D-glucosamine 6-phosphate (route II): step 2/2. It functions in the pathway nucleotide-sugar biosynthesis; UDP-N-acetyl-alpha-D-glucosamine biosynthesis; UDP-N-acetyl-alpha-D-glucosamine from N-acetyl-alpha-D-glucosamine 1-phosphate: step 1/1. It participates in bacterial outer membrane biogenesis; LPS lipid A biosynthesis. Catalyzes the last two sequential reactions in the de novo biosynthetic pathway for UDP-N-acetylglucosamine (UDP-GlcNAc). The C-terminal domain catalyzes the transfer of acetyl group from acetyl coenzyme A to glucosamine-1-phosphate (GlcN-1-P) to produce N-acetylglucosamine-1-phosphate (GlcNAc-1-P), which is converted into UDP-GlcNAc by the transfer of uridine 5-monophosphate (from uridine 5-triphosphate), a reaction catalyzed by the N-terminal domain. In Sorangium cellulosum (strain So ce56) (Polyangium cellulosum (strain So ce56)), this protein is Bifunctional protein GlmU.